An 89-amino-acid chain; its full sequence is Small ribosomal subunit protein uS15 (89 aa).

It belongs to the universal ribosomal protein uS15 family. As to quaternary structure, part of the 30S ribosomal subunit. Forms a bridge to the 50S subunit in the 70S ribosome, contacting the 23S rRNA.

In terms of biological role, one of the primary rRNA binding proteins, it binds directly to 16S rRNA where it helps nucleate assembly of the platform of the 30S subunit by binding and bridging several RNA helices of the 16S rRNA. Functionally, forms an intersubunit bridge (bridge B4) with the 23S rRNA of the 50S subunit in the ribosome. The sequence is that of Small ribosomal subunit protein uS15 from Acinetobacter baumannii (strain AB307-0294).